We begin with the raw amino-acid sequence, 376 residues long: Queuine tRNA-ribosyltransferase (376 aa).

The Proton acceptor role is filled by aspartate 93. Substrate contacts are provided by residues 93–97 (DSGGF), aspartate 147, glutamine 191, and glycine 218. An RNA binding region spans residues 249 to 255 (GVGKPED). Aspartate 268 acts as the Nucleophile in catalysis. An RNA binding; important for wobble base 34 recognition region spans residues 273–277 (TRNAR). Zn(2+) contacts are provided by cysteine 306, cysteine 308, cysteine 311, and histidine 337.

The protein belongs to the queuine tRNA-ribosyltransferase family. As to quaternary structure, homodimer. Within each dimer, one monomer is responsible for RNA recognition and catalysis, while the other monomer binds to the replacement base PreQ1. Zn(2+) serves as cofactor.

It catalyses the reaction 7-aminomethyl-7-carbaguanine + guanosine(34) in tRNA = 7-aminomethyl-7-carbaguanosine(34) in tRNA + guanine. It functions in the pathway tRNA modification; tRNA-queuosine biosynthesis. In terms of biological role, catalyzes the base-exchange of a guanine (G) residue with the queuine precursor 7-aminomethyl-7-deazaguanine (PreQ1) at position 34 (anticodon wobble position) in tRNAs with GU(N) anticodons (tRNA-Asp, -Asn, -His and -Tyr). Catalysis occurs through a double-displacement mechanism. The nucleophile active site attacks the C1' of nucleotide 34 to detach the guanine base from the RNA, forming a covalent enzyme-RNA intermediate. The proton acceptor active site deprotonates the incoming PreQ1, allowing a nucleophilic attack on the C1' of the ribose to form the product. After dissociation, two additional enzymatic reactions on the tRNA convert PreQ1 to queuine (Q), resulting in the hypermodified nucleoside queuosine (7-(((4,5-cis-dihydroxy-2-cyclopenten-1-yl)amino)methyl)-7-deazaguanosine). In Histophilus somni (strain 129Pt) (Haemophilus somnus), this protein is Queuine tRNA-ribosyltransferase.